The primary structure comprises 893 residues: ATPase family gene 2 protein homolog A (893 aa).

A compositionally biased stretch (basic residues) spans methionine 1–leucine 10. Residues methionine 1–serine 26 are disordered. The required for interaction with AFG2B and CINP stretch occupies residues methionine 1–glutamine 237. Residues asparagine 11 to serine 25 show a composition bias toward polar residues. The residue at position 272 (threonine 272) is a Phosphothreonine. Serine 274 and serine 279 each carry phosphoserine. Residues glycine 394–threonine 401 and glycine 668–threonine 675 contribute to the ATP site. Lysine 859 is covalently cross-linked (Glycyl lysine isopeptide (Lys-Gly) (interchain with G-Cter in SUMO2)).

Belongs to the AAA ATPase family. AFG2 subfamily. In terms of assembly, part of the 55LCC heterohexameric ATPase complex composed at least of AIRIM, AFG2A, AFG2B and CINP. Associates with pre-60S ribosomal particles.

The protein localises to the cytoplasm. Its subcellular location is the mitochondrion. It is found in the cytoskeleton. It localises to the spindle. It carries out the reaction ATP + H2O = ADP + phosphate + H(+). With respect to regulation, AFG2A alone display limited ATPase activity and is not regulated by RNA or DNA binding. In the context of 55LCC heterohexameric ATPase complex, the ATPase activity increases and is stimulated by DNA binding and inhibited in presence of RNA. ATP-dependent chaperone part of the 55LCC heterohexameric ATPase complex which is chromatin-associated and promotes replisome proteostasis to maintain replication fork progression and genome stability. Required for replication fork progression, sister chromatid cohesion, and chromosome stability. The ATPase activity is specifically enhanced by replication fork DNA and is coupled to cysteine protease-dependent cleavage of replisome substrates in response to replication fork damage. Uses ATPase activity to process replisome substrates in S-phase, facilitating their proteolytic turnover from chromatin to ensure DNA replication and mitotic fidelity. Plays an essential role in the cytoplasmic maturation steps of pre-60S ribosomal particles by promoting the release of shuttling protein RSL24D1/RLP24 from the pre-ribosomal particles. May be involved in morphological and functional mitochondrial transformations during spermatogenesis. This chain is ATPase family gene 2 protein homolog A, found in Homo sapiens (Human).